The sequence spans 360 residues: tRNA-specific 2-thiouridylase MnmA (360 aa).

ATP contacts are provided by residues 9 to 16 (AMSGGVDS) and leucine 35. The Nucleophile role is filled by cysteine 104. Cysteine 104 and cysteine 197 are disulfide-bonded. Glycine 128 is an ATP binding site. Residues 147 to 149 (KDQ) form an interaction with tRNA region. The active-site Cysteine persulfide intermediate is the cysteine 197.

This sequence belongs to the MnmA/TRMU family.

The protein resides in the cytoplasm. The catalysed reaction is S-sulfanyl-L-cysteinyl-[protein] + uridine(34) in tRNA + AH2 + ATP = 2-thiouridine(34) in tRNA + L-cysteinyl-[protein] + A + AMP + diphosphate + H(+). Its function is as follows. Catalyzes the 2-thiolation of uridine at the wobble position (U34) of tRNA, leading to the formation of s(2)U34. This Salinispora arenicola (strain CNS-205) protein is tRNA-specific 2-thiouridylase MnmA.